The chain runs to 202 residues: Small ribosomal subunit protein uS4c (202 aa).

The region spanning 90–159 is the S4 RNA-binding domain; that stretch reads MRLDNIIFRL…TKNYEFSQTY (70 aa).

It belongs to the universal ribosomal protein uS4 family. In terms of assembly, part of the 30S ribosomal subunit. Contacts protein S5. The interaction surface between S4 and S5 is involved in control of translational fidelity.

The protein resides in the plastid. It is found in the chloroplast. Functionally, one of the primary rRNA binding proteins, it binds directly to 16S rRNA where it nucleates assembly of the body of the 30S subunit. In terms of biological role, with S5 and S12 plays an important role in translational accuracy. The sequence is that of Small ribosomal subunit protein uS4c (rps4) from Huperzia lucidula (Shining clubmoss).